The primary structure comprises 97 residues: MSRKCELTGVGVLYGNNVSHSQRKTRRRFEPNLRSVKFTSDITAGKYRLSVNARCISSVEKAGGFDAYILQADDNVLSSNARAIKKKIIQTKTAKSL.

The protein belongs to the bacterial ribosomal protein bL28 family.

This chain is Large ribosomal subunit protein bL28, found in Rickettsia akari (strain Hartford).